Reading from the N-terminus, the 884-residue chain is Alanine--tRNA ligase (884 aa).

4 residues coordinate Zn(2+): His-562, His-566, Cys-674, and His-678.

The protein belongs to the class-II aminoacyl-tRNA synthetase family. Zn(2+) serves as cofactor.

The protein localises to the cytoplasm. It carries out the reaction tRNA(Ala) + L-alanine + ATP = L-alanyl-tRNA(Ala) + AMP + diphosphate. Functionally, catalyzes the attachment of alanine to tRNA(Ala) in a two-step reaction: alanine is first activated by ATP to form Ala-AMP and then transferred to the acceptor end of tRNA(Ala). Also edits incorrectly charged Ser-tRNA(Ala) and Gly-tRNA(Ala) via its editing domain. The sequence is that of Alanine--tRNA ligase from Rhizobium etli (strain ATCC 51251 / DSM 11541 / JCM 21823 / NBRC 15573 / CFN 42).